A 124-amino-acid polypeptide reads, in one-letter code: Small ribosomal subunit protein uS12 (124 aa).

3-methylthioaspartic acid is present on D90.

This sequence belongs to the universal ribosomal protein uS12 family. Part of the 30S ribosomal subunit. Contacts proteins S8 and S17. May interact with IF1 in the 30S initiation complex.

In terms of biological role, with S4 and S5 plays an important role in translational accuracy. Its function is as follows. Interacts with and stabilizes bases of the 16S rRNA that are involved in tRNA selection in the A site and with the mRNA backbone. Located at the interface of the 30S and 50S subunits, it traverses the body of the 30S subunit contacting proteins on the other side and probably holding the rRNA structure together. The combined cluster of proteins S8, S12 and S17 appears to hold together the shoulder and platform of the 30S subunit. This chain is Small ribosomal subunit protein uS12, found in Wolbachia sp. subsp. Drosophila simulans (strain wRi).